A 456-amino-acid chain; its full sequence is Bifunctional protein GlmU (456 aa).

Residues 1 to 228 (MPQNTLNTVI…SHLAAGVNNK (228 aa)) are pyrophosphorylase. Residues 11 to 14 (LAAG), Lys-25, Gln-75, 80 to 81 (GT), 102 to 104 (YGD), Gly-138, Glu-153, Asn-168, and Asn-226 contribute to the UDP-N-acetyl-alpha-D-glucosamine site. Residue Asp-104 coordinates Mg(2+). Residue Asn-226 participates in Mg(2+) binding. The linker stretch occupies residues 229-249 (RQLAELERIFQTEQAQELLKA). Residues 250 to 456 (GVTLRDPARF…GWVRPEKNKQ (207 aa)) form an N-acetyltransferase region. The UDP-N-acetyl-alpha-D-glucosamine site is built by Arg-332 and Lys-350. His-362 functions as the Proton acceptor in the catalytic mechanism. The UDP-N-acetyl-alpha-D-glucosamine site is built by Tyr-365 and Asn-376. Acetyl-CoA contacts are provided by residues Ala-379, 385–386 (NY), Ser-404, Ala-422, and Arg-439.

It in the N-terminal section; belongs to the N-acetylglucosamine-1-phosphate uridyltransferase family. This sequence in the C-terminal section; belongs to the transferase hexapeptide repeat family. Homotrimer. Mg(2+) serves as cofactor.

It is found in the cytoplasm. The catalysed reaction is alpha-D-glucosamine 1-phosphate + acetyl-CoA = N-acetyl-alpha-D-glucosamine 1-phosphate + CoA + H(+). It carries out the reaction N-acetyl-alpha-D-glucosamine 1-phosphate + UTP + H(+) = UDP-N-acetyl-alpha-D-glucosamine + diphosphate. It functions in the pathway nucleotide-sugar biosynthesis; UDP-N-acetyl-alpha-D-glucosamine biosynthesis; N-acetyl-alpha-D-glucosamine 1-phosphate from alpha-D-glucosamine 6-phosphate (route II): step 2/2. Its pathway is nucleotide-sugar biosynthesis; UDP-N-acetyl-alpha-D-glucosamine biosynthesis; UDP-N-acetyl-alpha-D-glucosamine from N-acetyl-alpha-D-glucosamine 1-phosphate: step 1/1. It participates in bacterial outer membrane biogenesis; LPS lipid A biosynthesis. Its function is as follows. Catalyzes the last two sequential reactions in the de novo biosynthetic pathway for UDP-N-acetylglucosamine (UDP-GlcNAc). The C-terminal domain catalyzes the transfer of acetyl group from acetyl coenzyme A to glucosamine-1-phosphate (GlcN-1-P) to produce N-acetylglucosamine-1-phosphate (GlcNAc-1-P), which is converted into UDP-GlcNAc by the transfer of uridine 5-monophosphate (from uridine 5-triphosphate), a reaction catalyzed by the N-terminal domain. The polypeptide is Bifunctional protein GlmU (Neisseria gonorrhoeae).